We begin with the raw amino-acid sequence, 320 residues long: Serpentine receptor class delta-40 (320 aa).

7 helical membrane-spanning segments follow: residues 12 to 32 (IFYP…IYLI), 42 to 62 (MLKV…VVSC), 95 to 115 (YQVL…TFVF), 133 to 153 (IILL…IMVI), 189 to 209 (LINF…SFFF), 243 to 263 (AFLP…CILT), and 273 to 293 (FMTV…LYFV).

It belongs to the nematode receptor-like protein srd family.

The protein resides in the membrane. The sequence is that of Serpentine receptor class delta-40 (srd-40) from Caenorhabditis elegans.